The primary structure comprises 948 residues: Coiled-coil domain-containing protein 66 (948 aa).

2 positions are modified to phosphothreonine: T115 and T121. Position 369 is a phosphoserine (S369). Residues 458–499 (DRRRQKQLEHQKAITAQVEEKRRKKQLEEEQRKKEEQEEELR) are disordered. Residues 467-558 (HQKAITAQVE…EQRIRELAQK (92 aa)) are a coiled coil. A mediates localization to cilia, centrosomes and spindle microtubules and the interaction with PCM1, CEP290, CEP104 and CSPP1 region spans residues 570–948 (GVDTIQMEYN…NQEESFGSSF (379 aa)). Residue S606 is modified to Phosphoserine. Disordered regions lie at residues 690 to 713 (QTKH…KRYI) and 788 to 808 (SFSK…RTQQ).

Homodimer; disulfide-linked. Interacts with CEP290. Interacts with PCM1. Interacts with ARMC9, TOGARAM1, CSPP1 and CEP104. Interacts with CDK5RAP2, CEP152, CEP192, TBG1 and PRC1. In terms of tissue distribution, widely expressed (at protein level). Expressed in retina, mainly in photoreceptors but also in outer plexiform and ganglion cell layers (at protein level).

It localises to the cytoplasm. The protein resides in the cytoskeleton. The protein localises to the microtubule organizing center. It is found in the centrosome. Its subcellular location is the centriolar satellite. It localises to the cell projection. The protein resides in the cilium. The protein localises to the cilium basal body. It is found in the cilium axoneme. Its subcellular location is the photoreceptor inner segment. It localises to the photoreceptor outer segment. The protein resides in the spindle. The protein localises to the midbody. Functionally, microtubule-binding protein required for ciliogenesis. May function in ciliogenesis by mediating the transport of proteins like BBS4 to the cilium, but also through the organization of the centriolar satellites. Required for the assembly of signaling-competent cilia with proper structure and length. Mediates this function in part by regulating transition zone assembly and basal body recruitment of the IFT-B complex. Cooperates with the ciliopathy proteins CSPP1 and CEP104 during cilium length regulation. Plays two important roles during cell division. First, is required for mitotic progression via regulation of spindle assembly, organization and orientation, levels of spindle microtubules (MTs), kinetochore-fiber integrity, and chromosome alignment. Second, functions during cytokinesis in part by regulating assembly and organization of central spindle and midbody MTs. Plays a role in retina morphogenesis and/or homeostasis. The protein is Coiled-coil domain-containing protein 66 of Homo sapiens (Human).